A 304-amino-acid polypeptide reads, in one-letter code: Glyceraldehyde-3-phosphate dehydrogenase 2 (304 aa).

Residues Arg1–Ile2, Asp22, and Arg67 each bind NAD(+). D-glyceraldehyde 3-phosphate is bound by residues Ser138–Thr140, Thr169, Thr198–Gly199, and Arg221. Catalysis depends on Cys139, which acts as the Nucleophile. Asn303 contacts NAD(+).

This sequence belongs to the glyceraldehyde-3-phosphate dehydrogenase family. In terms of assembly, homotetramer.

It is found in the cytoplasm. It carries out the reaction D-glyceraldehyde 3-phosphate + phosphate + NAD(+) = (2R)-3-phospho-glyceroyl phosphate + NADH + H(+). The protein operates within carbohydrate degradation; glycolysis; pyruvate from D-glyceraldehyde 3-phosphate: step 1/5. In Drosophila subobscura (Fruit fly), this protein is Glyceraldehyde-3-phosphate dehydrogenase 2 (Gapdh2).